The following is a 676-amino-acid chain: Potassium voltage-gated channel subfamily KQT member 1 (676 aa).

Disordered stretches follow at residues 1-28 (MAAASSPPRAERKRWGWGRLPGARRGSA) and 62-84 (APPASPAAPAAPPVASDLGPRPP). The Cytoplasmic segment spans residues 1–120 (MAAASSPPRA…YNFLERPTGW (120 aa)). Ser-27 is modified (phosphoserine; by PKA). The segment covering 62 to 73 (APPASPAAPAAP) has biased composition (pro residues). The helical transmembrane segment at 121–142 (KCFVYHFAVFLIVLVCLIFSVL) threads the bilayer. The Extracellular segment spans residues 143-153 (STIEQYAALAT). The chain crosses the membrane as a helical span at residues 154-176 (GTLFWMEIVLVVFFGTEYVVRLW). Residues 177–192 (SAGCRSKYVGLWGRLR) are Cytoplasmic-facing. A helical membrane pass occupies residues 193 to 218 (FARKPISIIDLIVVVASMVVLCVGSK). Over 219–226 (GQVFATSA) the chain is Extracellular. Residues 227-242 (IRGIRFLQILRMLHVD) form a helical; Voltage-sensor membrane-spanning segment. Positions 238–246 (MLHVDRQGG) are interaction with KCNE3. Residues 243 to 260 (RQGGTWRLLGSVVFIHRQ) are Cytoplasmic-facing. Residue Gln-244 participates in a 1,2-diacyl-sn-glycero-3-phospho-(1D-myo-inositol-4,5-bisphosphate) binding. A helical membrane pass occupies residues 261–283 (ELITTLYIGFLGLIFSSYFVYLA). Residues 284–299 (EKDAVNESGRVEFGSY) are Extracellular-facing. A glycan (N-linked (GlcNAc...) asparagine) is linked at Asn-289. The segment at residues 300-320 (ADALWWGVVTVTTIGYGDKVP) is an intramembrane region (pore-forming). Residues 321–322 (QT) lie on the Extracellular side of the membrane. A helical membrane pass occupies residues 323–348 (WVGKTIASCFSVFAISFFALPAGILG). The Cytoplasmic portion of the chain corresponds to 349 to 676 (SGFALKVQQK…VPRRGPDEGS (328 aa)). Residues 370 to 382 (AAASLIQTAWRCY) form an interaction with CALM region. Ser-407 and Ser-409 each carry phosphoserine. The interaction with CALM; calcium-dependent stretch occupies residues 515 to 529 (KVIRRMQYFVAKKKF). The tract at residues 535–572 (PYDVRDVIEQYSQGHLNLMVRIKELQRRLDQSIGKPSL) is interaction with KCNE1 C-terminus. Residues 585–621 (SNTIGARLNRVEDKVTQLDQRLALITDMLHQLLSLHG) adopt a coiled-coil conformation. Residues 588–616 (IGARLNRVEDKVTQLDQRLALITDMLHQL) are interaction with AKAP9. Positions 589–620 (GARLNRVEDKVTQLDQRLALITDMLHQLLSLH) are C-terminal assembly domain (tetramerization). Residues 620–676 (HGGSTPGSGGPPREGGAHITQPCGSGGSVDPELFLPSNTLPTYEQLTVPRRGPDEGS) are disordered. A compositionally biased stretch (gly residues) spans 623–632 (STPGSGGPPR). Residues 655-664 (PSNTLPTYEQ) are compositionally biased toward polar residues.

The protein belongs to the potassium channel family. KQT (TC 1.A.1.15) subfamily. Kv7.1/KCNQ1 sub-subfamily. As to quaternary structure, tetramer. Heterotetramer with KCNE1; targets to the membrane raft. Interacts (via C-terminus) with calmodulin; forms a heterooctameric structure (with 4:4 KCNQ1:CALM stoichiometry); the interaction is calcium-independent, constitutive, participates in the proper assembly of a functional channel and also acts a calcium sensor. KCNQ1 channels interact more strongly with Ca(2+)-CALM than with apoCALM. Interacts with AKAP9; targets protein kinase A (PKA) catalytic and regulatory subunits and protein phosphatase 1 (PP1) to the KCNQ1-KCNE1 complex, allowing PKA-mediated phosphorylation and increase of delayed rectifier potassium channel activity. Interacts with KCNE2; forms a heterooligomer complex that targets to the membrane raft and leading to currents with an apparently instantaneous activation, a rapid deactivation process and a linear current-voltage relationship and decreases the amplitude of the outward current. Interacts with AP2M1; mediates estrogen-induced internalization via clathrin-coated vesicles. Interacts with NEDD4L; promotes internalization and decreases I(Ks) currents. Interacts with USP2; counteracts the NEDD4L-specific down-regulation of I(Ks) and restore plasma membrane localization. Heterotetramer with KCNQ5; has a voltage-gated potassium channel activity. Interacts with KCNE3; four KCNE3 molecules are bound to one KCNQ1 tetramer (4:4 KCNQ1:KCNE3 stoichiometry); alters membrane raft localization; affects KCNQ1 structure and gating properties. Interacts with KCNE4; impairs KCNQ1 localization in lipid rafts and inhibits voltage-gated potassium channel activity. Interacts with KCNE5; impairs KCNQ1 localization in lipid rafts and only conducts current upon strong and continued depolarization. Interacts with SLC5A3; forms coregulatory channel-transporter complexes that modulate Na(+)-coupled myo-inositol influx through the transporter. Phosphorylation at Ser-27 by PKA; increases delayed rectifier potassium channel activity of the KCNQ1-KCNE1 complex through a macromolecular complex that includes PKA, PP1, and the targeting protein AKAP9. In terms of processing, ubiquitinated by NEDD4L; promotes internalization. The ubiquitinylated form is internalized through a clathrin-mediated endocytosis by interacting with AP2M1 and is recycled back to the cell membrane via RAB4A and RAB11A. Post-translationally, deubiquitinated by USP2; counteracts the NEDD4L-specific down-regulation of I(Ks) and restores the membrane localization. In terms of tissue distribution, abundantly expressed in heart, pancreas, prostate, kidney, small intestine and peripheral blood leukocytes. Less abundant in placenta, lung, spleen, colon, thymus, testis and ovaries.

The protein localises to the cell membrane. Its subcellular location is the cytoplasmic vesicle membrane. It is found in the early endosome. The protein resides in the membrane raft. It localises to the endoplasmic reticulum. The protein localises to the basolateral cell membrane. Its subcellular location is the apical cell membrane. The catalysed reaction is K(+)(in) = K(+)(out). With respect to regulation, PIP2 molecule is essential to activate KCNQ channels by inducing the coupling of the voltage-sensing domain (VSD) and the pore-forming domain (PD). Upon channel activation, PIP2 disrupts the VSD-calmodulin/CALM interactions, causing the release of CALM from the VSD which triggers the opening of the gate. Calcium potentiates KCNQ1 channel current through calcium-bound CALM. Calcium-bound CALM competes with PIP2 to stabilize the channel open state. Functionally, pore-forming subunit of the voltage-gated potassium (Kv) channel involved in the regulation of cardiomyocyte excitability and important in normal development and functions of myocardium, inner ear, stomach and colon. Associates with KCNE beta subunits that modulates current kinetics. Induces a voltage-dependent current by rapidly activating and slowly deactivating potassium-selective outward current. Also promotes a delayed voltage activated potassium current showing outward rectification characteristic. During beta-adrenergic receptor stimulation, participates in cardiac repolarization by associating with KCNE1 to form the I(Ks) cardiac potassium current that increases the amplitude and slows down the activation kinetics of outward potassium current I(Ks). Muscarinic agonist oxotremorine-M strongly suppresses KCNQ1/KCNE1 current. When associated with KCNE3, forms the potassium channel that is important for cyclic AMP-stimulated intestinal secretion of chloride ions. This interaction with KCNE3 is reduced by 17beta-estradiol, resulting in the reduction of currents. During conditions of increased substrate load, maintains the driving force for proximal tubular and intestinal sodium ions absorption, gastric acid secretion, and cAMP-induced jejunal chloride ions secretion. Allows the provision of potassium ions to the luminal membrane of the secretory canaliculus in the resting state as well as during stimulated acid secretion. When associated with KCNE2, forms a heterooligomer complex leading to currents with an apparently instantaneous activation, a rapid deactivation process and a linear current-voltage relationship and decreases the amplitude of the outward current. When associated with KCNE4, inhibits voltage-gated potassium channel activity. When associated with KCNE5, this complex only conducts current upon strong and continued depolarization. Also forms a heterotetramer with KCNQ5; has a voltage-gated potassium channel activity. Binds with phosphatidylinositol 4,5-bisphosphate. KCNQ1-KCNE2 channel associates with Na(+)-coupled myo-inositol symporter in the apical membrane of choroid plexus epithelium and regulates the myo-inositol gradient between blood and cerebrospinal fluid with an impact on neuron excitability. Non-functional alone but modulatory when coexpressed with the full-length isoform 1. The protein is Potassium voltage-gated channel subfamily KQT member 1 of Homo sapiens (Human).